Here is a 601-residue protein sequence, read N- to C-terminus: ATP-dependent lipid A-core flippase (601 aa).

4 helical membrane passes run 26 to 46 (VGLF…QPML), 82 to 102 (LMIV…NYFL), 167 to 187 (VFLF…MVAI), and 263 to 283 (VYTP…LFLV). Residues 30 to 321 (AVSILGYVIF…LSEVSSTIQR (292 aa)) form the ABC transmembrane type-1 domain. In terms of domain architecture, ABC transporter spans 353–589 (IEVRDLSFRY…GGHYARLHAM (237 aa)). 387–394 (GRSGSGKS) contributes to the ATP binding site.

The protein belongs to the ABC transporter superfamily. Lipid exporter (TC 3.A.1.106) family. Homodimer.

Its subcellular location is the cell inner membrane. It carries out the reaction ATP + H2O + lipid A-core oligosaccharideSide 1 = ADP + phosphate + lipid A-core oligosaccharideSide 2.. Involved in lipopolysaccharide (LPS) biosynthesis. Translocates lipid A-core from the inner to the outer leaflet of the inner membrane. Transmembrane domains (TMD) form a pore in the inner membrane and the ATP-binding domain (NBD) is responsible for energy generation. The sequence is that of ATP-dependent lipid A-core flippase from Aromatoleum aromaticum (strain DSM 19018 / LMG 30748 / EbN1) (Azoarcus sp. (strain EbN1)).